Here is a 721-residue protein sequence, read N- to C-terminus: Catalase-peroxidase 1 (721 aa).

The segment at residues 98-223 is a cross-link (tryptophyl-tyrosyl-methioninium (Trp-Tyr) (with M-249)); the sequence is WHAAGSYRVA…LAAVQMGLIY (126 aa). The active-site Proton acceptor is histidine 99. The tryptophyl-tyrosyl-methioninium (Tyr-Met) (with W-98) cross-link spans 223-249; that stretch reads YVNPEGVNGQPDPLRTAQDVRVTFGRM. Histidine 264 contacts heme b.

Belongs to the peroxidase family. Peroxidase/catalase subfamily. Homodimer or homotetramer. Heme b serves as cofactor. Post-translationally, formation of the three residue Trp-Tyr-Met cross-link is important for the catalase, but not the peroxidase activity of the enzyme.

The enzyme catalyses H2O2 + AH2 = A + 2 H2O. It carries out the reaction 2 H2O2 = O2 + 2 H2O. In terms of biological role, bifunctional enzyme with both catalase and broad-spectrum peroxidase activity. The sequence is that of Catalase-peroxidase 1 from Legionella pneumophila subsp. pneumophila (strain Philadelphia 1 / ATCC 33152 / DSM 7513).